A 148-amino-acid chain; its full sequence is Methylglyoxal synthase (148 aa).

One can recognise an MGS-like domain in the interval 4 to 148 (VSVPAIKRIV…LSYNTKVKKD (145 aa)). Residues H17, K21, 43–46 (TGTT), and 63–64 (SG) each bind substrate. D69 acts as the Proton donor/acceptor in catalysis. H96 contributes to the substrate binding site.

The protein belongs to the methylglyoxal synthase family.

The enzyme catalyses dihydroxyacetone phosphate = methylglyoxal + phosphate. Its function is as follows. Catalyzes the formation of methylglyoxal from dihydroxyacetone phosphate. In Leptospira interrogans serogroup Icterohaemorrhagiae serovar copenhageni (strain Fiocruz L1-130), this protein is Methylglyoxal synthase.